The chain runs to 227 residues: MAYPFQLGLQDATSPIMEELMNFHDHTLMIVFLISTLVLYIISLMLTTKLTHTSTMDAQEVETIWTILPAVILILIALPSLRILYMMDEINNPALTVKTMGHQWYWSYEYTDYEDLCFDSYMIPTNDLKPGELRLLEVDNRVVLPMELPIRMLISSEDVLHSWAVPSLGLKTDAIPGRLNQATVTSNRPGLFYGQCSEICGSNHSFMPIVLEMVPLKYFENWSASMI.

The Mitochondrial intermembrane segment spans residues 1–14 (MAYPFQLGLQDATS). The chain crosses the membrane as a helical span at residues 15-45 (PIMEELMNFHDHTLMIVFLISTLVLYIISLM). The Mitochondrial matrix portion of the chain corresponds to 46-59 (LTTKLTHTSTMDAQ). A helical transmembrane segment spans residues 60 to 87 (EVETIWTILPAVILILIALPSLRILYMM). Topologically, residues 88–227 (DEINNPALTV…YFENWSASMI (140 aa)) are mitochondrial intermembrane. The Cu cation site is built by His-161, Cys-196, Glu-198, Cys-200, His-204, and Met-207. Glu-198 is a binding site for Mg(2+). Phosphotyrosine is present on Tyr-218.

It belongs to the cytochrome c oxidase subunit 2 family. As to quaternary structure, component of the cytochrome c oxidase (complex IV, CIV), a multisubunit enzyme composed of 14 subunits. The complex is composed of a catalytic core of 3 subunits MT-CO1, MT-CO2 and MT-CO3, encoded in the mitochondrial DNA, and 11 supernumerary subunits COX4I, COX5A, COX5B, COX6A, COX6B, COX6C, COX7A, COX7B, COX7C, COX8 and NDUFA4, which are encoded in the nuclear genome. The complex exists as a monomer or a dimer and forms supercomplexes (SCs) in the inner mitochondrial membrane with NADH-ubiquinone oxidoreductase (complex I, CI) and ubiquinol-cytochrome c oxidoreductase (cytochrome b-c1 complex, complex III, CIII), resulting in different assemblies (supercomplex SCI(1)III(2)IV(1) and megacomplex MCI(2)III(2)IV(2)). Found in a complex with TMEM177, COA6, COX18, COX20, SCO1 and SCO2. Interacts with TMEM177 in a COX20-dependent manner. Interacts with COX20. Interacts with COX16. Cu cation serves as cofactor.

The protein resides in the mitochondrion inner membrane. It catalyses the reaction 4 Fe(II)-[cytochrome c] + O2 + 8 H(+)(in) = 4 Fe(III)-[cytochrome c] + 2 H2O + 4 H(+)(out). Its function is as follows. Component of the cytochrome c oxidase, the last enzyme in the mitochondrial electron transport chain which drives oxidative phosphorylation. The respiratory chain contains 3 multisubunit complexes succinate dehydrogenase (complex II, CII), ubiquinol-cytochrome c oxidoreductase (cytochrome b-c1 complex, complex III, CIII) and cytochrome c oxidase (complex IV, CIV), that cooperate to transfer electrons derived from NADH and succinate to molecular oxygen, creating an electrochemical gradient over the inner membrane that drives transmembrane transport and the ATP synthase. Cytochrome c oxidase is the component of the respiratory chain that catalyzes the reduction of oxygen to water. Electrons originating from reduced cytochrome c in the intermembrane space (IMS) are transferred via the dinuclear copper A center (CU(A)) of subunit 2 and heme A of subunit 1 to the active site in subunit 1, a binuclear center (BNC) formed by heme A3 and copper B (CU(B)). The BNC reduces molecular oxygen to 2 water molecules using 4 electrons from cytochrome c in the IMS and 4 protons from the mitochondrial matrix. The protein is Cytochrome c oxidase subunit 2 (MT-CO2) of Maxomys surifer (Indomalayan maxomys).